Here is a 1387-residue protein sequence, read N- to C-terminus: DNA-directed RNA polymerase subunit beta'' (1387 aa).

Zn(2+) contacts are provided by Cys224, Cys295, Cys302, and Cys305. The segment at 883–903 (SHTGKRNDPAGSGLIPDNGSD) is disordered.

This sequence belongs to the RNA polymerase beta' chain family. RpoC2 subfamily. As to quaternary structure, in plastids the minimal PEP RNA polymerase catalytic core is composed of four subunits: alpha, beta, beta', and beta''. When a (nuclear-encoded) sigma factor is associated with the core the holoenzyme is formed, which can initiate transcription. Requires Zn(2+) as cofactor.

The protein resides in the plastid. It is found in the chloroplast. The catalysed reaction is RNA(n) + a ribonucleoside 5'-triphosphate = RNA(n+1) + diphosphate. Its function is as follows. DNA-dependent RNA polymerase catalyzes the transcription of DNA into RNA using the four ribonucleoside triphosphates as substrates. The chain is DNA-directed RNA polymerase subunit beta'' from Platanus occidentalis (Sycamore).